Consider the following 31-residue polypeptide: Cytochrome b6-f complex subunit 6 (31 aa).

A helical transmembrane segment spans residues 4 to 26 (ITSYFGFLLAASTITTALFIGLS).

The protein belongs to the PetL family. As to quaternary structure, the 4 large subunits of the cytochrome b6-f complex are cytochrome b6, subunit IV (17 kDa polypeptide, PetD), cytochrome f and the Rieske protein, while the 4 small subunits are PetG, PetL, PetM and PetN. The complex functions as a dimer.

Its subcellular location is the plastid. It is found in the chloroplast thylakoid membrane. In terms of biological role, component of the cytochrome b6-f complex, which mediates electron transfer between photosystem II (PSII) and photosystem I (PSI), cyclic electron flow around PSI, and state transitions. PetL is important for photoautotrophic growth as well as for electron transfer efficiency and stability of the cytochrome b6-f complex. This is Cytochrome b6-f complex subunit 6 from Acorus calamus (Sweet flag).